Reading from the N-terminus, the 478-residue chain is Cytochrome c-552 (478 aa).

The first 26 residues, 1-26 (MTRIKINARRIFSLLIPFFFFTSVHA), serve as a signal peptide directing secretion. Histidine 94 contributes to the heme c binding site. Heme is bound by residues cysteine 122, cysteine 125, and lysine 126. Positions 160, 163, 164, 209, 212, and 213 each coordinate heme c. 4 residues coordinate Ca(2+): glutamate 215, tyrosine 216, lysine 261, and glutamine 263. Tyrosine 216 serves as a coordination point for substrate. Residue histidine 264 coordinates substrate. Residues histidine 275, cysteine 282, cysteine 285, histidine 286, histidine 301, cysteine 314, cysteine 317, histidine 318, and histidine 393 each contribute to the heme c site.

This sequence belongs to the cytochrome c-552 family. Ca(2+) serves as cofactor. Requires heme c as cofactor.

Its subcellular location is the periplasm. The enzyme catalyses 6 Fe(III)-[cytochrome c] + NH4(+) + 2 H2O = 6 Fe(II)-[cytochrome c] + nitrite + 8 H(+). Its pathway is nitrogen metabolism; nitrate reduction (assimilation). Functionally, catalyzes the reduction of nitrite to ammonia, consuming six electrons in the process. This Escherichia coli (strain ATCC 8739 / DSM 1576 / NBRC 3972 / NCIMB 8545 / WDCM 00012 / Crooks) protein is Cytochrome c-552.